Consider the following 951-residue polypeptide: Spliceosome associated factor 3, U4/U6 recycling protein (951 aa).

A disordered region spans residues 1–58 (MAATGNEEQTLLPDIEEEAEGMEREMESEDDEEEGMGVEHSEEEDEEDTSEDERENEA). Residues 14 to 56 (DIEEEAEGMEREMESEDDEEEGMGVEHSEEEDEEDTSEDEREN) are compositionally biased toward acidic residues. HAT repeat units follow at residues 88–120 (GKLHRLRKARQKMSELFPLTEEIWLDWLKDEIR), 126–157 (SDREKVYELFERAIKDYVCPEIWLEYVQYSIG), 163–199 (GGIERVRSIFERALTAVGLHMTKGASIWEAYREFEIV), 222–255 (AQLERIHTLFRRQLAVPLMDMEGTYAEYSDWADD), 304–336 (GDPARVQIIFERALAENCLVPDLWIKYTTYLDR), 339–371 (KIKDLVLSAHERAVRNCPWTMGLWKSYLLALER), 374–410 (ADHQTVKDVFEKALNAGFIQATDYVEIWQSYLDYLRR), and 467–500 (KNMQKARELWDSIMTKGNAKYANMWLEYYNLERS). The tract at residues 517–941 (CTSDYPEHVC…LDTQTKSLSN (425 aa)) is necessary and sufficient for U6 snRNA binding. Residues 533-593 (ERVEGSLEDW…VKADKKAQKK (61 aa)) adopt a coiled-coil conformation. Basic and acidic residues predominate over residues 567 to 581 (EALHARQEEEKAEQR). The tract at residues 567–686 (EALHARQEEE…HDMPKEQRKD (120 aa)) is disordered. Basic residues predominate over residues 582–596 (RKVKADKKAQKKGQK). Residues 608 to 619 (DDDEEEWGEEAE) are compositionally biased toward acidic residues. The span at 674–686 (RQPHDMPKEQRKD) shows a compositional bias: basic and acidic residues. 2 consecutive RRM domains span residues 688 to 766 (NCVF…PCVD) and 785 to 862 (HKIF…ISNP). The segment at 905 to 938 (RQSTPDAKAENGTISAPHATVTDGETSLDTQTKS) is disordered. Over residues 927-938 (DGETSLDTQTKS) the composition is skewed to polar residues.

Its subcellular location is the nucleus. It is found in the nucleoplasm. It localises to the cajal body. The protein localises to the nucleus speckle. The protein resides in the cytoplasm. Functionally, U6 snRNP-binding protein that functions as a recycling factor of the splicing machinery. Promotes the initial reassembly of U4 and U6 snRNPs following their ejection from the spliceosome during its maturation. May also function as a substrate targeting factor for deubiquitinases and mediate the deubiquitination of components of the spliceosome and histones. This chain is Spliceosome associated factor 3, U4/U6 recycling protein, found in Danio rerio (Zebrafish).